Consider the following 451-residue polypeptide: MFLGEDYLLTNRAAVRLFNEVKDLPIVDPHNHLDAKDIVENKPWSDIWEVEGATDHYVWELMRRCGISEEYITGSRSNKEKWLALAKVFPRFVGNPTYEWIHLDLWRRFNIKKVISEETAEEIWEETKKKLPEMTPQKLLRDMKVEILCTTDDPVSTLEHHRKAKEVVEGVTILPTWRPDRAMNVDKEGWKEYVEKMGERYGEDTSTLEGFLSALWKSHEHFKEHGCVASDHALLEPSIYYVDENRARAIHEKAFSGEKLTQDEINDYKAFMMMQFGRMNQETNWVTQLHIGALRDYRDSLFKTLGPDSGGDISTNFLRIAEGLRYFLNEFDGKLKIVLYVLDPTHLPTVATIARAFPNVYVGAPWWFNDSPFGMEMHLKYLASVDLLYNLAGMVTDSRKLLSFGSRTEMFRRVLSSVVGEMVERGQIPIKEARELVKHVSYDGPKALFFG.

Belongs to the metallo-dependent hydrolases superfamily. Uronate isomerase family.

It catalyses the reaction D-glucuronate = D-fructuronate. The enzyme catalyses aldehydo-D-galacturonate = keto-D-tagaturonate. It functions in the pathway carbohydrate metabolism; pentose and glucuronate interconversion. In Thermotoga petrophila (strain ATCC BAA-488 / DSM 13995 / JCM 10881 / RKU-1), this protein is Uronate isomerase.